The following is an 881-amino-acid chain: Fanconi anemia core complex-associated protein 100 (881 aa).

The disordered stretch occupies residues 94–119 (GRSRSTSQDDRDSEDGDQPSPVIPVD). Ser-667 carries the post-translational modification Phosphoserine.

As to quaternary structure, belongs to the multisubunit FA complex composed of FANCA, FANCB, FANCC, FANCE, FANCF, FANCG, FANCL/PHF9, FANCM, FAAP24 and FAAP100. Forms a subcomplex with FANCB and FANCL.

Its subcellular location is the nucleus. Plays a role in Fanconi anemia-associated DNA damage response network. Regulates FANCD2 monoubiquitination and the stability of the FA core complex. Induces chromosomal instability as well as hypersensitivity to DNA cross-linking agents, when repressed. The protein is Fanconi anemia core complex-associated protein 100 of Homo sapiens (Human).